A 114-amino-acid chain; its full sequence is Small ribosomal subunit protein bS6 (114 aa).

The protein belongs to the bacterial ribosomal protein bS6 family.

Its function is as follows. Binds together with bS18 to 16S ribosomal RNA. The sequence is that of Small ribosomal subunit protein bS6 from Phocaeicola vulgatus (strain ATCC 8482 / DSM 1447 / JCM 5826 / CCUG 4940 / NBRC 14291 / NCTC 11154) (Bacteroides vulgatus).